A 208-amino-acid chain; its full sequence is Ribosomal RNA large subunit methyltransferase E (208 aa).

Residues Gly-63, Trp-65, Asp-83, Asp-99, and Asp-124 each coordinate S-adenosyl-L-methionine. Lys-164 (proton acceptor) is an active-site residue.

It belongs to the class I-like SAM-binding methyltransferase superfamily. RNA methyltransferase RlmE family.

Its subcellular location is the cytoplasm. It catalyses the reaction uridine(2552) in 23S rRNA + S-adenosyl-L-methionine = 2'-O-methyluridine(2552) in 23S rRNA + S-adenosyl-L-homocysteine + H(+). Its function is as follows. Specifically methylates the uridine in position 2552 of 23S rRNA at the 2'-O position of the ribose in the fully assembled 50S ribosomal subunit. The chain is Ribosomal RNA large subunit methyltransferase E from Salmonella typhi.